We begin with the raw amino-acid sequence, 306 residues long: Grixazone synthase (306 aa).

The Cu(2+) site is built by histidine 39, histidine 58, histidine 67, histidine 222, histidine 226, and histidine 248.

Belongs to the tyrosinase family. The cofactor is Cu(2+).

The catalysed reaction is 2 3-amino-4-hydroxybenzoate + N-acetyl-L-cysteine + 2 O2 + H(+) = grixazone B + CO2 + 4 H2O. It catalyses the reaction 2 3-amino-4-hydroxybenzaldehyde + N-acetyl-L-cysteine + 2 O2 = grixazone A + formate + 3 H2O + H(+). It carries out the reaction 4 2-aminophenol + 3 O2 = 2 2-aminophenoxazin-3-one + 6 H2O. Inhibited by 3-amino-4-hydroxybenzensulfonic acid, 4-hydroxy-3-nitrobenzaldehyde, L-tyrosine, p-hydroxybenzaldehyde. Activated by the copper chaperone GriE. Functionally, involved in the biosynthesis of the parasiticide antibiotic grixazone. Catalyzes the oxidation of 3-amino-4-hydroxybenzoate (3,4-AHBOA) to yield the corresponding quinone imine which is then non-enzymatically conjugated with the thiol group of N-acetylcysteine. The resultant compound is oxidized to its quinone imine enzymatically and is then dimerized non-enzymatically with another quinone imine oxidized by GriF to yield grixazone B. 3-amino-4-hydroxybenzaldehyde (3,4-AHBAL) can also be used as substrate to yield grixazone A. In the grixazone biosynthetic pathway, it can also function as an o-aminophenol oxidase that catalyzes the formation of the phenoxazinone chromophore from alpha-aminophenol. It can also use 2-amino-4-methylphenol, and to a lesser extent, 3,4-dihydroxybenzaldehyde, catechol and 3,4-dihydroxy-L-phenylalanine (L-DOPA) as substrates. In contrast to tyrosinases, it does not display monophenolase activity. This chain is Grixazone synthase, found in Streptomyces griseus subsp. griseus (strain JCM 4626 / CBS 651.72 / NBRC 13350 / KCC S-0626 / ISP 5235).